The primary structure comprises 428 residues: L-gulono-1,4-lactone dehydrogenase (428 aa).

The region spanning 12–179 (QVCAPSAIVR…SQVTLQTVPL (168 aa)) is the FAD-binding PCMH-type domain.

The protein belongs to the oxygen-dependent FAD-linked oxidoreductase family. A divalent metal cation serves as cofactor.

It catalyses the reaction L-gulono-1,4-lactone + 2 Fe(III)-[cytochrome c] = L-ascorbate + 2 Fe(II)-[cytochrome c] + 3 H(+). It functions in the pathway cofactor biosynthesis; L-ascorbate biosynthesis. In terms of biological role, oxidizes L-gulono-1,4-lactone to L-xylo-hexulonolactone which spontaneously isomerizes to L-ascorbate. The sequence is that of L-gulono-1,4-lactone dehydrogenase from Mycobacterium tuberculosis (strain CDC 1551 / Oshkosh).